A 470-amino-acid polypeptide reads, in one-letter code: Light-independent protochlorophyllide reductase subunit N (470 aa).

Cysteine 24, cysteine 49, and cysteine 109 together coordinate [4Fe-4S] cluster.

Belongs to the BchN/ChlN family. Protochlorophyllide reductase is composed of three subunits; ChlL, ChlN and ChlB. Forms a heterotetramer of two ChlB and two ChlN subunits. Requires [4Fe-4S] cluster as cofactor.

It catalyses the reaction chlorophyllide a + oxidized 2[4Fe-4S]-[ferredoxin] + 2 ADP + 2 phosphate = protochlorophyllide a + reduced 2[4Fe-4S]-[ferredoxin] + 2 ATP + 2 H2O. Its pathway is porphyrin-containing compound metabolism; chlorophyll biosynthesis (light-independent). Functionally, component of the dark-operative protochlorophyllide reductase (DPOR) that uses Mg-ATP and reduced ferredoxin to reduce ring D of protochlorophyllide (Pchlide) to form chlorophyllide a (Chlide). This reaction is light-independent. The NB-protein (ChlN-ChlB) is the catalytic component of the complex. The chain is Light-independent protochlorophyllide reductase subunit N from Acaryochloris marina (strain MBIC 11017).